We begin with the raw amino-acid sequence, 179 residues long: MAKLHDYYRDTVVNELKAKFNYSSVMQVPRIEKITLNMGVGEALTDKKLLDNAVADLAAISGQKPLVTKARKSVAGFKIRQGYPIGCKVTLRGERMWEFFERLITIAVPRIRDFRGLNTKSFDGRGNYSMGVREQIIFPEIDYDKVDRVRGLDITITTTAKSDEEGQALLAAFNFPFRK.

Belongs to the universal ribosomal protein uL5 family. Part of the 50S ribosomal subunit; part of the 5S rRNA/L5/L18/L25 subcomplex. Contacts the 5S rRNA and the P site tRNA. Forms a bridge to the 30S subunit in the 70S ribosome.

Functionally, this is one of the proteins that bind and probably mediate the attachment of the 5S RNA into the large ribosomal subunit, where it forms part of the central protuberance. In the 70S ribosome it contacts protein S13 of the 30S subunit (bridge B1b), connecting the 2 subunits; this bridge is implicated in subunit movement. Contacts the P site tRNA; the 5S rRNA and some of its associated proteins might help stabilize positioning of ribosome-bound tRNAs. The protein is Large ribosomal subunit protein uL5 of Histophilus somni (strain 129Pt) (Haemophilus somnus).